We begin with the raw amino-acid sequence, 170 residues long: Adenine phosphoribosyltransferase (170 aa).

Belongs to the purine/pyrimidine phosphoribosyltransferase family. Homodimer.

The protein resides in the cytoplasm. It carries out the reaction AMP + diphosphate = 5-phospho-alpha-D-ribose 1-diphosphate + adenine. It participates in purine metabolism; AMP biosynthesis via salvage pathway; AMP from adenine: step 1/1. In terms of biological role, catalyzes a salvage reaction resulting in the formation of AMP, that is energically less costly than de novo synthesis. The chain is Adenine phosphoribosyltransferase from Lactococcus lactis subsp. lactis (strain IL1403) (Streptococcus lactis).